A 336-amino-acid polypeptide reads, in one-letter code: uncharacterized protein (336 aa).

This is an uncharacterized protein from Alkalihalophilus pseudofirmus (strain ATCC BAA-2126 / JCM 17055 / OF4) (Bacillus pseudofirmus).